The primary structure comprises 227 residues: UPF0173 metal-dependent hydrolase BPUM_2573 (227 aa).

Belongs to the UPF0173 family.

The protein is UPF0173 metal-dependent hydrolase BPUM_2573 of Bacillus pumilus (strain SAFR-032).